The following is a 185-amino-acid chain: Homeobox expressed in ES cells 1 (185 aa).

The segment at residues 108–167 (GRRPRTAFTQNQIEVLENVFRVNCYPGIDIREDLAQKLNLEEDRIQIWFQNRRAKLKRSH) is a DNA-binding region (homeobox).

It belongs to the ANF homeobox family. Can form heterodimers with PROP1 in binding to DNA. Interacts with TLE1.

It is found in the nucleus. Required for the normal development of the forebrain, eyes and other anterior structures such as the olfactory placodes and pituitary gland. Possible transcriptional repressor. Binds to the palindromic PIII sequence, 5'-AGCTTGAGTCTAATTGAATTAACTGTAC-3'. HESX1 and PROP1 bind as heterodimers on this palindromic site, and, in vitro, HESX1 can antagonize PROP1 activation. The chain is Homeobox expressed in ES cells 1 (HESX1) from Pan paniscus (Pygmy chimpanzee).